Reading from the N-terminus, the 388-residue chain is S-adenosylmethionine synthase (388 aa).

ATP is bound at residue H17. Residue D19 coordinates Mg(2+). E45 lines the K(+) pocket. L-methionine is bound by residues E58 and Q102. The interval Q102–A112 is flexible loop. Residues D167–K169, R232–F233, D241, R247–K248, A264, and K268 contribute to the ATP site. An L-methionine-binding site is contributed by D241. Residue K272 coordinates L-methionine.

The protein belongs to the AdoMet synthase family. As to quaternary structure, homotetramer; dimer of dimers. Mg(2+) serves as cofactor. It depends on K(+) as a cofactor.

Its subcellular location is the cytoplasm. It catalyses the reaction L-methionine + ATP + H2O = S-adenosyl-L-methionine + phosphate + diphosphate. It participates in amino-acid biosynthesis; S-adenosyl-L-methionine biosynthesis; S-adenosyl-L-methionine from L-methionine: step 1/1. Catalyzes the formation of S-adenosylmethionine (AdoMet) from methionine and ATP. The overall synthetic reaction is composed of two sequential steps, AdoMet formation and the subsequent tripolyphosphate hydrolysis which occurs prior to release of AdoMet from the enzyme. This Paramagnetospirillum magneticum (strain ATCC 700264 / AMB-1) (Magnetospirillum magneticum) protein is S-adenosylmethionine synthase.